Reading from the N-terminus, the 221-residue chain is MAKVSLFNSKGENIGPIDLKDEVFAIEPNFDVIWRYVDMQLTNARAGTASTKTRGEVSGGGRKPWIQKHTGRARQGSIRAPHWRHGGVAHGPKPRVYFKRLNKKMKRLALKSALSLRLKEGNLIVVDEIKFKRPKTKDLREVLKNLGLENQKVLVVLPKKVEEYVNVKISGRNIPGVKVIIADNPGVDRTNIDGLNVYDILNHDKLVLLQGTVQKIEEVLG.

The tract at residues 48 to 77 (TASTKTRGEVSGGGRKPWIQKHTGRARQGS) is disordered.

This sequence belongs to the universal ribosomal protein uL4 family. Part of the 50S ribosomal subunit.

In terms of biological role, one of the primary rRNA binding proteins, this protein initially binds near the 5'-end of the 23S rRNA. It is important during the early stages of 50S assembly. It makes multiple contacts with different domains of the 23S rRNA in the assembled 50S subunit and ribosome. Its function is as follows. Forms part of the polypeptide exit tunnel. The polypeptide is Large ribosomal subunit protein uL4 (Thermosipho africanus (strain TCF52B)).